Here is a 396-residue protein sequence, read N- to C-terminus: Putative nickel insertion protein (396 aa).

This sequence belongs to the LarC family.

The sequence is that of Putative nickel insertion protein from Wolinella succinogenes (strain ATCC 29543 / DSM 1740 / CCUG 13145 / JCM 31913 / LMG 7466 / NCTC 11488 / FDC 602W) (Vibrio succinogenes).